We begin with the raw amino-acid sequence, 546 residues long: Glucose-6-phosphate isomerase (546 aa).

Glu-356 functions as the Proton donor in the catalytic mechanism. Residues His-387 and Lys-507 contribute to the active site.

This sequence belongs to the GPI family.

It localises to the cytoplasm. It carries out the reaction alpha-D-glucose 6-phosphate = beta-D-fructose 6-phosphate. It participates in carbohydrate biosynthesis; gluconeogenesis. The protein operates within carbohydrate degradation; glycolysis; D-glyceraldehyde 3-phosphate and glycerone phosphate from D-glucose: step 2/4. Functionally, catalyzes the reversible isomerization of glucose-6-phosphate to fructose-6-phosphate. The chain is Glucose-6-phosphate isomerase from Syntrophus aciditrophicus (strain SB).